Reading from the N-terminus, the 348-residue chain is Papaya proteinase 4 (348 aa).

A signal peptide spans 1–18 (MAIICSFSKLLFVAICLF). The propeptide at 19 to 132 (GHMSLSYCDF…EEFVNEDIVD (114 aa)) is activation peptide. 3 disulfide bridges follow: cysteine 154/cysteine 195, cysteine 188/cysteine 227, and cysteine 285/cysteine 336. Cysteine 157 is an active-site residue. Active-site residues include histidine 291 and asparagine 311.

This sequence belongs to the peptidase C1 family.

It catalyses the reaction Preferential cleavage: Gly-|-Xaa, in proteins and in small molecule substrates.. Not inhibited by cystatin. Functionally, thiol protease with a substrate specificity very different from the other thiol proteases. The sequence is that of Papaya proteinase 4 from Carica papaya (Papaya).